Consider the following 280-residue polypeptide: Protein scylla (280 aa).

Residues 39 to 96 (LMSKKAKTTTGGSSNGSNATATSTTTSTSSSIKHKQPAGSSNNNVGQSQSKKTKPSGS) are disordered. Composition is skewed to low complexity over residues 46–69 (TTTG…TSSS) and 77–96 (GSSN…PSGS).

This sequence belongs to the DDIT4 family.

It is found in the cytoplasm. Functionally, inhibits cell growth by regulating the Tor pathway upstream of the Tsc1-Tsc2 complex and downstream of Akt1. Acts as a cell death activator during head development. The protein is Protein scylla (scyl) of Drosophila melanogaster (Fruit fly).